The chain runs to 179 residues: Isopentenyl-diphosphate Delta-isomerase (179 aa).

Residues H25 and H31 each contribute to the Mn(2+) site. Positions 29-161 (ELHRAITVYI…PEQFTAWFQL (133 aa)) constitute a Nudix hydrolase domain. C66 is an active-site residue. Residue C66 participates in Mg(2+) binding. H68 is a binding site for Mn(2+). E86 provides a ligand contact to Mg(2+). Residues E111 and E113 each coordinate Mn(2+). E113 is an active-site residue.

The protein belongs to the IPP isomerase type 1 family. As to quaternary structure, homodimer. It depends on Mg(2+) as a cofactor. The cofactor is Mn(2+).

The protein localises to the cytoplasm. The enzyme catalyses isopentenyl diphosphate = dimethylallyl diphosphate. Its pathway is isoprenoid biosynthesis; dimethylallyl diphosphate biosynthesis; dimethylallyl diphosphate from isopentenyl diphosphate: step 1/1. In terms of biological role, catalyzes the 1,3-allylic rearrangement of the homoallylic substrate isopentenyl (IPP) to its highly electrophilic allylic isomer, dimethylallyl diphosphate (DMAPP). This is Isopentenyl-diphosphate Delta-isomerase from Pectobacterium atrosepticum (strain SCRI 1043 / ATCC BAA-672) (Erwinia carotovora subsp. atroseptica).